The sequence spans 279 residues: Large ribosomal subunit protein uL2 (279 aa).

Positions 223-279 (TVRGSAMNPNDHPHGGGEGRSPVGMDAPRTPWGKRHMGVKTRNNKKSSTSMIVRRRK) are disordered. The segment covering 254–267 (WGKRHMGVKTRNNK) has biased composition (basic residues).

The protein belongs to the universal ribosomal protein uL2 family. In terms of assembly, part of the 50S ribosomal subunit. Forms a bridge to the 30S subunit in the 70S ribosome.

One of the primary rRNA binding proteins. Required for association of the 30S and 50S subunits to form the 70S ribosome, for tRNA binding and peptide bond formation. It has been suggested to have peptidyltransferase activity; this is somewhat controversial. Makes several contacts with the 16S rRNA in the 70S ribosome. The protein is Large ribosomal subunit protein uL2 of Ureaplasma parvum serovar 3 (strain ATCC 27815 / 27 / NCTC 11736).